Reading from the N-terminus, the 95-residue chain is Cerebratulus toxin A-III (95 aa).

Intrachain disulfides connect Cys-17-Cys-38, Cys-23-Cys-34, and Cys-48-Cys-61.

Belongs to the worm cytolysin family.

The protein resides in the secreted. In terms of biological role, permeabilizes a variety of cells. Forms large pores which allows the release of large proteins almost as rapidly as small organic molecules and inorganic ions. At sublytic concentrations, the toxin also inhibits protein kinase C and endogenous voltage-gated cation selective (sodium, calcium) channels occurring in the nervous and cardiovascular systems. In Cerebratulus lacteus (Milky ribbon worm), this protein is Cerebratulus toxin A-III.